The following is a 70-amino-acid chain: Fumarase D (70 aa).

This sequence belongs to the FumD family.

The enzyme catalyses (S)-malate = fumarate + H2O. In terms of biological role, in vitro catalyzes the addition of water to fumarate, forming malate. Cannot catalyze the reverse reaction. Cannot use the cis-isomer maleate as substrate. This Salmonella typhi protein is Fumarase D.